A 216-amino-acid chain; its full sequence is Large ribosomal subunit protein uL3 (216 aa).

Glutamine 157 is modified (N5-methylglutamine).

The protein belongs to the universal ribosomal protein uL3 family. In terms of assembly, part of the 50S ribosomal subunit. Forms a cluster with proteins L14 and L19. Post-translationally, methylated by PrmB.

In terms of biological role, one of the primary rRNA binding proteins, it binds directly near the 3'-end of the 23S rRNA, where it nucleates assembly of the 50S subunit. This Xanthomonas axonopodis pv. citri (strain 306) protein is Large ribosomal subunit protein uL3.